The sequence spans 334 residues: TPR repeat-containing protein MJ0798 (334 aa).

TPR repeat units lie at residues 102-135 (WKLWKNLGDKAYLWKAYYEALFCYNKALELNQNT), 137-168 (LLCKKGYALLKLYKRDLAIKYFEKASEKDRNN), 169-202 (YKALFGLGKSYYLMSDNKNSIKYFEKVLELNPND), 204-235 (EALEYLGELYYEEDCEKAINYFKKALELKPDD), 236-269 (IDLILKVAFTYFKLKKYKHALKYFEKALKLNPNV), 273-306 (EQIYESMGRIYIYLGEDEKAIECFEKLKEINLYH), and 308-333 (EIYEIIALTYEEVGNIEKAKEFYKKL).

The chain is TPR repeat-containing protein MJ0798 from Methanocaldococcus jannaschii (strain ATCC 43067 / DSM 2661 / JAL-1 / JCM 10045 / NBRC 100440) (Methanococcus jannaschii).